The sequence spans 252 residues: Imidazole glycerol phosphate synthase subunit HisF (252 aa).

Active-site residues include D11 and D130.

Belongs to the HisA/HisF family. In terms of assembly, heterodimer of HisH and HisF.

It localises to the cytoplasm. It catalyses the reaction 5-[(5-phospho-1-deoxy-D-ribulos-1-ylimino)methylamino]-1-(5-phospho-beta-D-ribosyl)imidazole-4-carboxamide + L-glutamine = D-erythro-1-(imidazol-4-yl)glycerol 3-phosphate + 5-amino-1-(5-phospho-beta-D-ribosyl)imidazole-4-carboxamide + L-glutamate + H(+). Its pathway is amino-acid biosynthesis; L-histidine biosynthesis; L-histidine from 5-phospho-alpha-D-ribose 1-diphosphate: step 5/9. IGPS catalyzes the conversion of PRFAR and glutamine to IGP, AICAR and glutamate. The HisF subunit catalyzes the cyclization activity that produces IGP and AICAR from PRFAR using the ammonia provided by the HisH subunit. This is Imidazole glycerol phosphate synthase subunit HisF from Azobacteroides pseudotrichonymphae genomovar. CFP2.